Reading from the N-terminus, the 188-residue chain is Crossover junction endodeoxyribonuclease RuvC (188 aa).

Active-site residues include Asp-7, Glu-68, and Asp-141. The Mg(2+) site is built by Asp-7, Glu-68, and Asp-141.

Belongs to the RuvC family. Homodimer which binds Holliday junction (HJ) DNA. The HJ becomes 2-fold symmetrical on binding to RuvC with unstacked arms; it has a different conformation from HJ DNA in complex with RuvA. In the full resolvosome a probable DNA-RuvA(4)-RuvB(12)-RuvC(2) complex forms which resolves the HJ. Mg(2+) serves as cofactor.

The protein resides in the cytoplasm. It catalyses the reaction Endonucleolytic cleavage at a junction such as a reciprocal single-stranded crossover between two homologous DNA duplexes (Holliday junction).. The RuvA-RuvB-RuvC complex processes Holliday junction (HJ) DNA during genetic recombination and DNA repair. Endonuclease that resolves HJ intermediates. Cleaves cruciform DNA by making single-stranded nicks across the HJ at symmetrical positions within the homologous arms, yielding a 5'-phosphate and a 3'-hydroxyl group; requires a central core of homology in the junction. The consensus cleavage sequence is 5'-(A/T)TT(C/G)-3'. Cleavage occurs on the 3'-side of the TT dinucleotide at the point of strand exchange. HJ branch migration catalyzed by RuvA-RuvB allows RuvC to scan DNA until it finds its consensus sequence, where it cleaves and resolves the cruciform DNA. This chain is Crossover junction endodeoxyribonuclease RuvC, found in Streptomyces coelicolor (strain ATCC BAA-471 / A3(2) / M145).